A 122-amino-acid polypeptide reads, in one-letter code: Large ribosomal subunit protein bL12 (122 aa).

Belongs to the bacterial ribosomal protein bL12 family. As to quaternary structure, homodimer. Part of the ribosomal stalk of the 50S ribosomal subunit. Forms a multimeric L10(L12)X complex, where L10 forms an elongated spine to which 2 to 4 L12 dimers bind in a sequential fashion. Binds GTP-bound translation factors.

Forms part of the ribosomal stalk which helps the ribosome interact with GTP-bound translation factors. Is thus essential for accurate translation. The protein is Large ribosomal subunit protein bL12 of Sulfurimonas denitrificans (strain ATCC 33889 / DSM 1251) (Thiomicrospira denitrificans (strain ATCC 33889 / DSM 1251)).